We begin with the raw amino-acid sequence, 614 residues long: Acetylcholinesterase (614 aa).

The signal sequence occupies residues 1–31; the sequence is MRPPWYPLHTPSLAFPLLFLLLSLLGGGARA. C100 and C127 are disulfide-bonded. The active-site Acyl-ester intermediate is S234. A disulfide bond links C288 and C303. The N-linked (GlcNAc...) asparagine glycan is linked to N296. The Charge relay system role is filled by E365. N-linked (GlcNAc...) asparagine glycosylation is present at N381. C440 and C560 are joined by a disulfide. The active-site Charge relay system is H478. N495 carries N-linked (GlcNAc...) asparagine glycosylation.

Belongs to the type-B carboxylesterase/lipase family. As to quaternary structure, isoform H generates GPI-anchored dimers; disulfide linked. Isoform T generates multiple structures, ranging from monomers and dimers to collagen-tailed and hydrophobic-tailed forms, in which catalytic tetramers are associated with anchoring proteins that attach them to the basal lamina or to cell membranes. In the collagen-tailed forms, isoform T subunits are associated with a specific collagen, COLQ, which triggers the formation of isoform T tetramers, from monomers and dimers. Interacts with PRIMA1. The interaction with PRIMA1 is required to anchor it to the basal lamina of cells and organize into tetramers. Predominates in most expressing tissues except erythrocytes where a glycophospholipid-attached form of ACHE predominates.

Its subcellular location is the synapse. The protein resides in the secreted. It is found in the cell membrane. The enzyme catalyses acetylcholine + H2O = choline + acetate + H(+). Functionally, terminates signal transduction at the neuromuscular junction by rapid hydrolysis of the acetylcholine released into the synaptic cleft. This is Acetylcholinesterase (Ache) from Mus musculus (Mouse).